Reading from the N-terminus, the 453-residue chain is Putative sodium-coupled neutral amino acid transporter 11 (453 aa).

The segment covering 1–10 (MSYQQPQLSG) has biased composition (polar residues). The interval 1-34 (MSYQQPQLSGPLQRETDSSDRESLISGHEHGGKS) is disordered. A compositionally biased stretch (basic and acidic residues) spans 14–32 (RETDSSDRESLISGHEHGG). Transmembrane regions (helical) follow at residues 39-59 (AVFNVVNSVIGSGIIGLPYSM), 66-86 (LGILLLFLVSYITDFSLVLLI), 106-126 (GFPGYLLLSTLQFMYPFIAMI), 150-170 (GWFISRHFIIVVSTVTCTLPL), 179-199 (LGKISFISTILTTVILGIVMT), 222-242 (AIQAIGVMSFAFICHHNCFLV), 262-282 (ILVSVFICVLFATCGYFTFTG), 299-319 (VTFGRFCYGITVILTYPIECF), 337-357 (VFHTVLAVLIVTAATLVSLMI), 359-379 (CLGIVLELNGVLCAAPLIFII), and 398-418 (IMACVMFPVGAVVMVVGFVMA). N-linked (GlcNAc...) asparagine glycans are attached at residues asparagine 438 and asparagine 443.

The protein belongs to the amino acid/polyamine transporter 2 family.

Its subcellular location is the membrane. Functionally, putative sodium-dependent amino acid/proton antiporter. The sequence is that of Putative sodium-coupled neutral amino acid transporter 11 (Slc38a11) from Mus musculus (Mouse).